The sequence spans 141 residues: Large ribosomal subunit protein uL11 (141 aa).

The protein belongs to the universal ribosomal protein uL11 family. As to quaternary structure, part of the ribosomal stalk of the 50S ribosomal subunit. Interacts with L10 and the large rRNA to form the base of the stalk. L10 forms an elongated spine to which L12 dimers bind in a sequential fashion forming a multimeric L10(L12)X complex. In terms of processing, one or more lysine residues are methylated.

Forms part of the ribosomal stalk which helps the ribosome interact with GTP-bound translation factors. The chain is Large ribosomal subunit protein uL11 from Campylobacter lari (strain RM2100 / D67 / ATCC BAA-1060).